Reading from the N-terminus, the 167-residue chain is UPF0225 protein VV1_2912 (167 aa).

Belongs to the UPF0225 family.

This is UPF0225 protein VV1_2912 from Vibrio vulnificus (strain CMCP6).